The chain runs to 124 residues: Small ribosomal subunit protein uS12 (124 aa).

Positions 1–32 are disordered; that stretch reads MPTIQQLVRKGRQAKTTKTKTPALKGSPQRRG. The span at 9-18 shows a compositional bias: basic residues; the sequence is RKGRQAKTTK. Position 89 is a 3-methylthioaspartic acid (aspartate 89). The disordered stretch occupies residues 105 to 124; sequence QGVRNRKQARSRYGAKKEKS. The span at 108-118 shows a compositional bias: basic residues; that stretch reads RNRKQARSRYG.

This sequence belongs to the universal ribosomal protein uS12 family. In terms of assembly, part of the 30S ribosomal subunit. Contacts proteins S8 and S17. May interact with IF1 in the 30S initiation complex.

Functionally, with S4 and S5 plays an important role in translational accuracy. Interacts with and stabilizes bases of the 16S rRNA that are involved in tRNA selection in the A site and with the mRNA backbone. Located at the interface of the 30S and 50S subunits, it traverses the body of the 30S subunit contacting proteins on the other side and probably holding the rRNA structure together. The combined cluster of proteins S8, S12 and S17 appears to hold together the shoulder and platform of the 30S subunit. The sequence is that of Small ribosomal subunit protein uS12 from Salinispora arenicola (strain CNS-205).